Reading from the N-terminus, the 221-residue chain is ATP phosphoribosyltransferase (221 aa).

Belongs to the ATP phosphoribosyltransferase family. Short subfamily. Heteromultimer composed of HisG and HisZ subunits.

The protein localises to the cytoplasm. The enzyme catalyses 1-(5-phospho-beta-D-ribosyl)-ATP + diphosphate = 5-phospho-alpha-D-ribose 1-diphosphate + ATP. Its pathway is amino-acid biosynthesis; L-histidine biosynthesis; L-histidine from 5-phospho-alpha-D-ribose 1-diphosphate: step 1/9. Catalyzes the condensation of ATP and 5-phosphoribose 1-diphosphate to form N'-(5'-phosphoribosyl)-ATP (PR-ATP). Has a crucial role in the pathway because the rate of histidine biosynthesis seems to be controlled primarily by regulation of HisG enzymatic activity. This is ATP phosphoribosyltransferase from Rhizorhabdus wittichii (strain DSM 6014 / CCUG 31198 / JCM 15750 / NBRC 105917 / EY 4224 / RW1) (Sphingomonas wittichii).